Consider the following 506-residue polypeptide: Parthenolide synthase (506 aa).

The chain crosses the membrane as a helical span at residues 10 to 30 (LFLPTLCTILISYIIIKYVLI). 5 N-linked (GlcNAc...) asparagine glycosylation sites follow: N32, N63, N121, N168, and N175. Residues 301–321 (LLLNVLLGAIDTTFTTIVWAM) traverse the membrane as a helical segment. Heme is bound at residue C448.

The protein belongs to the cytochrome P450 family.

The protein resides in the membrane. It catalyses the reaction (+)-costunolide + reduced [NADPH--hemoprotein reductase] + O2 = parthenolide + oxidized [NADPH--hemoprotein reductase] + H2O + H(+). It functions in the pathway secondary metabolite biosynthesis; terpenoid biosynthesis. Its function is as follows. Involved in the biosynthesis of germacrene-derived sesquiterpene lactones. Component of the parthenolide biosynthetic pathway; parthenolide and conjugates are promising anti-cancer drugs highly active against colon cancer cells. Catalyzes the conversion of costunolide to parthenolide. This Tanacetum parthenium (Feverfew) protein is Parthenolide synthase.